Reading from the N-terminus, the 433-residue chain is Putative ankyrin repeat protein R578 (433 aa).

ANK repeat units follow at residues 166–195 (NKEI…ILSE), 197–224 (DHLI…LSKL), 356–386 (VNPN…DIHS), and 388–415 (PSLI…ICDE).

This chain is Putative ankyrin repeat protein R578, found in Acanthamoeba polyphaga mimivirus (APMV).